Consider the following 683-residue polypeptide: DNA-directed RNA polymerase subunit beta' (683 aa).

The Zn(2+) site is built by C69, C71, C87, and C90. The Mg(2+) site is built by D489, D491, and D493.

The protein belongs to the RNA polymerase beta' chain family. RpoC1 subfamily. As to quaternary structure, in plastids the minimal PEP RNA polymerase catalytic core is composed of four subunits: alpha, beta, beta', and beta''. When a (nuclear-encoded) sigma factor is associated with the core the holoenzyme is formed, which can initiate transcription. It depends on Mg(2+) as a cofactor. Zn(2+) serves as cofactor.

It localises to the plastid. Its subcellular location is the chloroplast. It carries out the reaction RNA(n) + a ribonucleoside 5'-triphosphate = RNA(n+1) + diphosphate. In terms of biological role, DNA-dependent RNA polymerase catalyzes the transcription of DNA into RNA using the four ribonucleoside triphosphates as substrates. The chain is DNA-directed RNA polymerase subunit beta' from Triticum aestivum (Wheat).